The primary structure comprises 493 residues: Voltage-gated potassium channel regulatory subunit KCNF1 (493 aa).

At 1 to 183 (MDASAEQSLP…KPESSCPARV (183 aa)) the chain is on the cytoplasmic side. A helical transmembrane segment spans residues 184 to 204 (VAVLSFLLILVSSVVMCMGTI). Residues 224–244 (NVETACIGWFTLEYLLRLFSS) form a helical membrane-spanning segment. Topologically, residues 245–249 (PNKLH) are cytoplasmic. The helical transmembrane segment at 250 to 270 (FALSFMNIVDVLAILPFYVSL) threads the bilayer. Residues 290–310 (QALRIMRIARIFKLARHSSGL) form a helical; Voltage-sensor membrane-spanning segment. At 311-324 (QTLTYALKRSFKEL) the chain is on the cytoplasmic side. Residues 325-345 (GLLLMYLAVGIFVFSALGYTM) form a helical membrane-spanning segment. The segment at residues 358–378 (PQSFWWAIITMTTVGYGDIYP) is an intramembrane region (pore-forming). A Selectivity filter motif is present at residues 370 to 375 (TVGYGD). The helical transmembrane segment at 386–406 (NAAISFLCGVIAIALPIHPII) threads the bilayer. At 407–493 (NNFVRYYNKQ…HHRTRLQSCK (87 aa)) the chain is on the cytoplasmic side. The tract at residues 434–468 (SSSAEGKPGGSRSDLDTLPPEPAAREGPSWGSRLK) is disordered.

Belongs to the potassium channel family. F (TC 1.A.1.2) subfamily. Kv5.1/KCNF1 sub-subfamily. Heterotetramer with KCNB1 or KCNB2.

The protein localises to the cell membrane. Functionally, regulatory alpha-subunit of the voltage-gated potassium (Kv) channel which, when coassembled with KCNB1 or KCNB2, can modulate their expression and their gating kinetics by acting on deactivation upon repolarization and inactivation during maintained depolarization. Accelerates inactivation but has relatively little effect on deactivation. Coexpression with KCNB1 or KCNB2 markedly slows inactivation. Each modulatory subunit has its own specific properties of regulation, and can lead to extensive inhibitions, to large changes in kinetics, and/or to large shifts in the voltage dependencies of the inactivation process. The gating kinetics depends on the nature and stoichiometry of the associated regulatory sunbunit. Fails to produce a potassium current when expressed alone. The polypeptide is Voltage-gated potassium channel regulatory subunit KCNF1 (Mus musculus (Mouse)).